Consider the following 809-residue polypeptide: Probable disease resistance protein At5g66900 (809 aa).

In terms of domain architecture, RPW8 spans Met-1 to Val-150. A coiled-coil region spans residues Pro-50–Phe-86. NB-ARC domains lie at Pro-153–Trp-280 and Ser-339–Val-438. Ala-194–Thr-201 is an ATP binding site. The stretch at Gln-494–Phe-515 forms a coiled coil. LRR repeat units follow at residues Lys-650–Ile-672, Ser-674–Leu-696, Arg-698–Leu-720, and Asn-722–Leu-744.

This sequence belongs to the disease resistance NB-LRR family.

Its function is as follows. Probable disease resistance protein. This Arabidopsis thaliana (Mouse-ear cress) protein is Probable disease resistance protein At5g66900.